The following is a 176-amino-acid chain: Putative REP-associated tyrosine transposase (176 aa).

Positions 59 and 61 each coordinate Mg(2+). The active-site Nucleophile is Tyr148.

It belongs to the transposase 17 family. RAYT subfamily. Homodimer. Mg(2+) is required as a cofactor.

Transposase responsible for transposition an insertion sequence (IS) element. Transposition occurs in 2 main steps, excision from the donor DNA 'top strand' into a single strand circle and its subsequent reinsertion into the DNA target. This increases the copy number of the IS. This is Putative REP-associated tyrosine transposase from Haemophilus influenzae (strain ATCC 51907 / DSM 11121 / KW20 / Rd).